Reading from the N-terminus, the 173-residue chain is Large ribosomal RNA subunit accumulation protein YceD (173 aa).

It belongs to the DUF177 domain family.

In terms of biological role, plays a role in synthesis, processing and/or stability of 23S rRNA. The protein is Large ribosomal RNA subunit accumulation protein YceD (yceD) of Salmonella typhi.